Consider the following 267-residue polypeptide: Putative B3 domain-containing protein LOC_Os07g12820 (267 aa).

Residues 4–99 (PTFSMVKIKT…RLNVIIFNKE (96 aa)) constitute a DNA-binding region (TF-B3).

It is found in the nucleus. The protein is Putative B3 domain-containing protein LOC_Os07g12820 of Oryza sativa subsp. japonica (Rice).